The following is a 337-amino-acid chain: Glyceraldehyde-3-phosphate dehydrogenase 1, cytosolic (337 aa).

Residues 13-14, Asp-35, and Arg-82 contribute to the NAD(+) site; that span reads RI. D-glyceraldehyde 3-phosphate is bound by residues 153-155, Thr-184, 213-214, and Arg-236; these read SCT and TG. Cys-154 functions as the Nucleophile in the catalytic mechanism. Position 318 (Asn-318) interacts with NAD(+).

Belongs to the glyceraldehyde-3-phosphate dehydrogenase family. Homotetramer.

It is found in the cytoplasm. The catalysed reaction is D-glyceraldehyde 3-phosphate + phosphate + NAD(+) = (2R)-3-phospho-glyceroyl phosphate + NADH + H(+). It functions in the pathway carbohydrate degradation; glycolysis; pyruvate from D-glyceraldehyde 3-phosphate: step 1/5. Its function is as follows. Key enzyme in glycolysis that catalyzes the first step of the pathway by converting D-glyceraldehyde 3-phosphate (G3P) into 3-phospho-D-glyceroyl phosphate. Essential for the maintenance of cellular ATP levels and carbohydrate metabolism. This Hordeum vulgare (Barley) protein is Glyceraldehyde-3-phosphate dehydrogenase 1, cytosolic (GAPC).